We begin with the raw amino-acid sequence, 290 residues long: MPAQILDGKAIAAKRRALVGEAVGQRIERGLRRPGLAVILVGQNPASAVYVRNKRRACEEAGILSRAYDLDADVSEGELLERIDRLNADPEIDGILVQLPLPGHIDEQTVIERIDPVKDVDGFHPENMGRLALRLPGLRPCTPRGVMTLLHHTGIELEGRDAVVLGQSNIVGRPMTLELLNARCTVTVCHSRTRNVAERVRQADLVVASVGKPGLIQGDWIGEGAVVIDVGINRLDSGKLTGDVDFEAASQRASWITPVPGGVGPMTVATLLENTLDAARNRDELTAAAC.

NADP(+) is bound by residues 166–168 (GQS), Ser191, and Ile232.

Belongs to the tetrahydrofolate dehydrogenase/cyclohydrolase family. As to quaternary structure, homodimer.

The catalysed reaction is (6R)-5,10-methylene-5,6,7,8-tetrahydrofolate + NADP(+) = (6R)-5,10-methenyltetrahydrofolate + NADPH. The enzyme catalyses (6R)-5,10-methenyltetrahydrofolate + H2O = (6R)-10-formyltetrahydrofolate + H(+). It functions in the pathway one-carbon metabolism; tetrahydrofolate interconversion. Its function is as follows. Catalyzes the oxidation of 5,10-methylenetetrahydrofolate to 5,10-methenyltetrahydrofolate and then the hydrolysis of 5,10-methenyltetrahydrofolate to 10-formyltetrahydrofolate. This chain is Bifunctional protein FolD, found in Halorhodospira halophila (strain DSM 244 / SL1) (Ectothiorhodospira halophila (strain DSM 244 / SL1)).